The following is a 239-amino-acid chain: Glucosamine-6-phosphate deaminase (239 aa).

Asp62 functions as the Proton acceptor; for enolization step in the catalytic mechanism. The active-site For ring-opening step is Asn128. His130 acts as the Proton acceptor; for ring-opening step in catalysis. Glu135 (for ring-opening step) is an active-site residue.

Belongs to the glucosamine/galactosamine-6-phosphate isomerase family. NagB subfamily.

The catalysed reaction is alpha-D-glucosamine 6-phosphate + H2O = beta-D-fructose 6-phosphate + NH4(+). It functions in the pathway amino-sugar metabolism; N-acetylneuraminate degradation; D-fructose 6-phosphate from N-acetylneuraminate: step 5/5. Catalyzes the reversible isomerization-deamination of glucosamine 6-phosphate (GlcN6P) to form fructose 6-phosphate (Fru6P) and ammonium ion. In Lactobacillus acidophilus (strain ATCC 700396 / NCK56 / N2 / NCFM), this protein is Glucosamine-6-phosphate deaminase.